A 109-amino-acid chain; its full sequence is Small ribosomal subunit protein uS17 (109 aa).

The protein belongs to the universal ribosomal protein uS17 family. In terms of assembly, part of the 30S ribosomal subunit.

One of the primary rRNA binding proteins, it binds specifically to the 5'-end of 16S ribosomal RNA. In Halobacterium salinarum (strain ATCC 29341 / DSM 671 / R1), this protein is Small ribosomal subunit protein uS17.